A 224-amino-acid polypeptide reads, in one-letter code: uncharacterized protein (224 aa).

The region spanning 10–77 (TPYYLQFYNQ…DRNGFSITSL (68 aa)) is the HTH gntR-type domain. Positions 37–56 (ETQLAKSFGVSRSPIREAMR) form a DNA-binding region, H-T-H motif.

This is an uncharacterized protein from Bacillus subtilis (strain 168).